Reading from the N-terminus, the 595-residue chain is Alginate biosynthesis sensor protein KinB (595 aa).

Over 1-12 (MSMPLPMKLRTR) the chain is Cytoplasmic. The chain crosses the membrane as a helical span at residues 13–33 (LFLSISALITVSLFGLLLGLF). Over 34–167 (SVMQLGRAQE…SDAETSARHR (134 aa)) the chain is Periplasmic. Residues 168 to 188 (AYLVAGLLGLVGVAILLIGFV) form a helical membrane-spanning segment. Residues 189 to 595 (TAHSIARRFG…GARFYMLLPV (407 aa)) lie on the Cytoplasmic side of the membrane. In terms of domain architecture, HAMP spans 195-247 (RRFGAPIETLARAADRIGEGDFDVTLPMTNVAEVGQLTRRFGLMAEALRQYRK). In terms of domain architecture, PAS spans 258-323 (RRLQAVLDSI…AVEKALLGEV (66 aa)). In terms of domain architecture, PAC spans 327–369 (AMPDLVVDVAGESRLLAWSLYPVTHPGGHSVGAVLVVRDVTEQ). Positions 382–595 (RASHELRTPV…GARFYMLLPV (214 aa)) constitute a Histidine kinase domain. Histidine 385 carries the phosphohistidine; by autocatalysis modification.

In terms of processing, autophosphorylated.

It is found in the cell inner membrane. The catalysed reaction is ATP + protein L-histidine = ADP + protein N-phospho-L-histidine.. Functionally, member of the two-component regulatory system AlgB/KinB involved in regulation of alginate biosynthesis genes. KinB functions as a membrane-associated protein kinase that phosphorylates AlgB, probably in response to environmental signals. The polypeptide is Alginate biosynthesis sensor protein KinB (kinB) (Pseudomonas aeruginosa).